Reading from the N-terminus, the 349-residue chain is GATA zinc finger domain-containing protein 24 (349 aa).

Composition is skewed to low complexity over residues 95–169 (NINR…VNKN) and 177–195 (NKSCKNNNINNNNNNNNNS). 2 disordered regions span residues 95 to 227 (NINR…PVIK) and 250 to 294 (DYDY…KPVQ). Residues 196-212 (ENKEKNNINNNNEKENN) show a composition bias toward basic and acidic residues. The segment covering 257–272 (SNESSSPTLSASTLSS) has biased composition (low complexity). Positions 278 to 289 (KVLKRGRGRPSK) are enriched in basic residues. A GATA-type zinc finger spans residues 295–323 (CFSCFRSNTPEWRKGKDKDGNVIDLCNAC).

The polypeptide is GATA zinc finger domain-containing protein 24 (gtaX) (Dictyostelium discoideum (Social amoeba)).